Here is a 464-residue protein sequence, read N- to C-terminus: MLATDSDPIVAIATAAGRGGIGVVRVSFGRGGEAAALPLIDALCGQQLAPRHASYVPFVDEHGAPLDRGIALYFPAPHSYTGEHVLELQGHGGPIVMQLLLQRCLDAGRGFGLRLAQPGEFTRRAFLNDKLDLAQAEAVADLIEASTEAAARSAGRSLDGAFSRQIHALVEDVITLRMLVEATLDFPEEEIDFLEAADARGKLARIREQLAHVLGDARQGALLREGLSVVLAGQPNVGKSSLLNALAGAELAIVTPIAGTTRDKVAQTIQVEGIPLHIIDTAGLRETEDEVERIGIARTWSEIERADVVLHLLDSRTGMTADDEVIAARFPGGVPVVRVLNKTDLTGVPACVEHPAAAGDLTEVHLSAKRGDGIDMLRAELLRIAGWQAGAEGVYLARERHLIALRAAQEHLAQAADHAEQRAQSLDLFAEELRLAQEQLNAITGEFTSDDLLGVIFSRFCIGK.

R25, E87, and K130 together coordinate (6S)-5-formyl-5,6,7,8-tetrahydrofolate. The TrmE-type G domain occupies 226–386 (GLSVVLAGQP…LRAELLRIAG (161 aa)). N236 contacts K(+). GTP is bound by residues 236–241 (NVGKSS), 255–261 (TPIAGTT), and 280–283 (DTAG). A Mg(2+)-binding site is contributed by S240. Residues T255, I257, and T260 each coordinate K(+). T261 serves as a coordination point for Mg(2+). K464 contributes to the (6S)-5-formyl-5,6,7,8-tetrahydrofolate binding site.

It belongs to the TRAFAC class TrmE-Era-EngA-EngB-Septin-like GTPase superfamily. TrmE GTPase family. Homodimer. Heterotetramer of two MnmE and two MnmG subunits. Requires K(+) as cofactor.

The protein resides in the cytoplasm. In terms of biological role, exhibits a very high intrinsic GTPase hydrolysis rate. Involved in the addition of a carboxymethylaminomethyl (cmnm) group at the wobble position (U34) of certain tRNAs, forming tRNA-cmnm(5)s(2)U34. This chain is tRNA modification GTPase MnmE, found in Burkholderia ambifaria (strain MC40-6).